Reading from the N-terminus, the 84-residue chain is U8-theraphotoxin-Hhn1c 1 (84 aa).

An N-terminal signal peptide occupies residues 1–21; that stretch reads MKVVLIVCLVWVMAMMELVSC. 5 cysteine pairs are disulfide-bonded: cysteine 23–cysteine 35, cysteine 29–cysteine 44, cysteine 34–cysteine 67, cysteine 54–cysteine 75, and cysteine 69–cysteine 81.

Belongs to the AVIT (prokineticin) family. Expressed by the venom gland.

It is found in the secreted. In Cyriopagopus hainanus (Chinese bird spider), this protein is U8-theraphotoxin-Hhn1c 1.